Here is a 203-residue protein sequence, read N- to C-terminus: Cytochrome c biogenesis CcmF N-terminal-like mitochondrial protein 2 (203 aa).

2 helical membrane-spanning segments follow: residues I44–A64 and I143–M163.

Belongs to the CcmF/CycK/Ccl1/NrfE/CcsA family. Interacts with CCMFC, CCMFN1, CCMH and CYTC-1.

The protein resides in the mitochondrion inner membrane. Its function is as follows. Forms a complex with CCMFC, CCMFN1 and CCMH that performs the assembly of heme with c-type apocytochromes in mitochondria. The polypeptide is Cytochrome c biogenesis CcmF N-terminal-like mitochondrial protein 2 (Arabidopsis thaliana (Mouse-ear cress)).